We begin with the raw amino-acid sequence, 129 residues long: Small ribosomal subunit protein uS11 (129 aa).

This sequence belongs to the universal ribosomal protein uS11 family. As to quaternary structure, part of the 30S ribosomal subunit. Interacts with proteins S7 and S18. Binds to IF-3.

Located on the platform of the 30S subunit, it bridges several disparate RNA helices of the 16S rRNA. Forms part of the Shine-Dalgarno cleft in the 70S ribosome. In Stenotrophomonas maltophilia (strain R551-3), this protein is Small ribosomal subunit protein uS11.